Here is a 2260-residue protein sequence, read N- to C-terminus: MKRHQFKSWIFELREIWREIKNSHYFLDSWIKFDSVGFFTHIFFHQERFMKLFDPRIGSILLSRDSQGSTSNRYFTIKGVVLLVVAVLISRINNRKMVERKNLYLMGLLPIPMNSIGPRNETLEESFWSSNINRLIVSLLYLPKRKKISESCFMDPQERTWVLPINKKCIMPESNRGSRWWRNRIGKRRDSSCKISNETVAGIEISFKEKDSKYLEFLFLSYTDNPIHKDHDWELFDRLSPRKKRNIINLNSGQLFEILGKDLICYLMSAFREKRPIEGEGFFKQQGAEATIQSNDIEHVSHLFSRNKWGISLQNCAQFHMWQFRQDLFVSWGKNQHESDFLRNVSRENLIWLDNVWLVNKDRFFSKVRNVLSNIQYDSTRSIFVQVTDSSQWKGFSDQSRDHFDSIRNVDSEYHTLIDQTEIQQLKERSILWDPSFLQTERTEIESDRFPKCLFGSSSMSRLFTEREKQMNNHLLPEEIEEFLGNPTRSIRSLFSDRWSELHLGSNPTERSTRDQKFWKKKQDVSFVLSRRSENKEMVDIFKIITYLQNTVSIHPISSDPGCDMVPKDEPDMDSSNKISFLNKNPFSEEGFQEMADLFTLSITEPDLVYHRGFAFSIDSYGLDEKKFLNEVFNSRDESKKKSLLVLPPLFYEENESFYRRIRKKSVRIYCGNDLEDPKLKTAVFASNNIMEAVNQYRLIRDLIQVQYRTYGYIRNVSNRFFLMNRSDRNFEYGIQRDQIGNDTLNHITIMKYMINQHLSNLKKSKWFDSLISRTERSMNRDPDAYRYKWSNGSKNFQKHLEHFISEQKNRFQVVFDRLRINQYSIDWSEAIDKQDLSKSLRFFLSKSLLFLSKSLPFLSKSLPFFFVSIGDIPIHRSEIHIYELKGPNDQLCNQLLESIGVQIVHLNKLKPFLLDDHDTSQRPKFLINGGTILPFLFKKIQKWMIDSFHTRKNRRKSFDNTDFYFSMISHDRDDWLNTVKPFHRSSLISSFYKANRLRFLNDPHHFWFYCNKRFPFYVEKTRINNYDLTYGQFLNILFIRNKIFSLCVGKKKHILLERETISPIESQVSDIFIPNDFPQSGDETYKLYKSFHFPIRSDPFVRRAIYSIADISATPLTEEQIANFERTYCQPLSDMNLFDSEGKNLHQYLSFNSNMGLIHTPCSEKYLPSGKRKKQSLCLKKCVEKRRMYRTFQRDSAFSNLSKWNLFQTYMPWLLTSTGCKYLNFTLLDTFSDPLPIPSSSQKFVSIFNDIMHGSAWPIPQKKLWAILPQWTLISEISSKCLQNLLLLSEEMIHRNNESPVLLIWTHLRSTNAREFLYSILFLLLVAGYLVRIHLLFVFRASSELQTGLEKIKSLMIPSYMIELRKLLYRYPTSELNSFWLKNLLLVALEQLGDSLEEIRGSASGGNMLLGGGPAYGIKSIRSKKKYLNINLIDLISIIPNPINRITFSRNTRHLSRTSKEIYSLIRKRKNVNGDWIDDKIESWVANSDSIDDEEREFLIQFSTLTTEKRIDQILLSLTHSDHLSKNDSGYQMIEQPGSIYLRYLVDIHKKYLMNYEFNRSCLAERRIFLAHYQTITYSQTSCGANSFHFPSHGKPFSLRLALSPSRGILVIGSIGTGRSYLVKYLATNSYVPFITVFPNKFLDDKPKGYLIDDIDIDESDDIDDDLDTELLTMTNVLTMYMTPKIDQFDITLQFELAKAMSPCIIWIPNIHDLYVNESNYLSIGLLENYLSRDCERCSTRNILVIASTHIPQKVDPALIAPNKLNTCIKIRRLLIPQRRKHFFILSYTRGFRLEKKMFHTNGFESITMGSNARDLVALINEALSSSITQKKSIIETNTIRSALHRQTWDLRSQVRSVQDHGILFYQIGRAVAQNVLLSNCPIDPISIYMKKKSRKEGDSYLYEWYFELGTSMKKLTILLYLLSCSAGSVAQDLWSSPSPGPDEKNGITSYGFVENDSDLVHGLLEVEGALVGSSRTEKDCSQFDNNRVTLLEPKNQLDMMQNGSCSIVDQRFQYEKYESEFEEGEGEGALDPQQIEEDLFNHIVWAPRIWRPCGNLFNCIERPTELGFPYWAGSFRGKQIIYHKEDELQENDSEFLQSGTMQYQTRDRSSKEQGFFRISQFIWDPADPFFFLFKDQPFVSVFSRREFFADEEMSKGLITSQTNPPTSIYKRWFIKNTQEKHFELLIHRQRWLRTNSSLSNGSFRSNTLSESYQYLSNLFLSNGTLLDQMTKTLLRKRWLFPDEMKHLIHVTGERFPIP.

Position 1614–1621 (1614–1621) interacts with ATP; it reads GSIGTGRS.

Belongs to the Ycf2 family.

It is found in the plastid. The protein localises to the chloroplast stroma. Its function is as follows. Probable ATPase of unknown function. Its presence in a non-photosynthetic plant (Epifagus virginiana) and experiments in tobacco indicate that it has an essential function which is probably not related to photosynthesis. This chain is Protein Ycf2, found in Dioscorea elephantipes (Elephant's foot yam).